Consider the following 83-residue polypeptide: MTNAELLQEGINLMFAGVGFVMLFLFILIYAIEFMSKLVNTYFPEPVKAPSTKPIQAENHDLERLRPVIVAAIAHHRRQQGLK.

A helical transmembrane segment spans residues 10–32 (GINLMFAGVGFVMLFLFILIYAI).

The protein belongs to the OadG family. In terms of assembly, heterotrimer of an alpha, a beta and a gamma subunit. Na(+) is required as a cofactor.

It localises to the cell membrane. The catalysed reaction is oxaloacetate + 2 Na(+)(in) + H(+) = pyruvate + 2 Na(+)(out) + CO2. Its function is as follows. Catalyzes the decarboxylation of oxaloacetate coupled to Na(+) translocation. In Pasteurella multocida (strain Pm70), this protein is Probable oxaloacetate decarboxylase gamma chain (oadG).